We begin with the raw amino-acid sequence, 208 residues long: Uracil phosphoribosyltransferase (208 aa).

Residues arginine 78, arginine 103, and 130-138 contribute to the 5-phospho-alpha-D-ribose 1-diphosphate site; that span reads DPMLATGGS. Uracil contacts are provided by residues isoleucine 193 and 198 to 200; that span reads GDA. 5-phospho-alpha-D-ribose 1-diphosphate is bound at residue aspartate 199.

Belongs to the UPRTase family. It depends on Mg(2+) as a cofactor.

It catalyses the reaction UMP + diphosphate = 5-phospho-alpha-D-ribose 1-diphosphate + uracil. It participates in pyrimidine metabolism; UMP biosynthesis via salvage pathway; UMP from uracil: step 1/1. Allosterically activated by GTP. Its function is as follows. Catalyzes the conversion of uracil and 5-phospho-alpha-D-ribose 1-diphosphate (PRPP) to UMP and diphosphate. The polypeptide is Uracil phosphoribosyltransferase (Acholeplasma laidlawii (strain PG-8A)).